Reading from the N-terminus, the 151-residue chain is MASMQKRLQKELLALQNDPPPGMTLNEKSVQNTITQWIVDMEGASGTVYEGEKFQLLFKFSSRYPFDSPQVMFTGDNIPVHPHVYSNGHICLSILTEDWSPALSVQSVCLSIISMLSSCKEKRRPPDNSFYVRTCNKNPKKTKWWYHDDTC.

One can recognise a UBC core domain in the interval 3–151 (SMQKRLQKEL…TKWWYHDDTC (149 aa)). Cys-91 serves as the catalytic Glycyl thioester intermediate.

It belongs to the ubiquitin-conjugating enzyme family.

The protein resides in the nucleus. It catalyses the reaction S-ubiquitinyl-[E1 ubiquitin-activating enzyme]-L-cysteine + [E2 ubiquitin-conjugating enzyme]-L-cysteine = [E1 ubiquitin-activating enzyme]-L-cysteine + S-ubiquitinyl-[E2 ubiquitin-conjugating enzyme]-L-cysteine.. The enzyme catalyses S-ubiquitinyl-[E1 ubiquitin-activating enzyme]-L-cysteine + [acceptor protein]-N-terminal-amino acid = [E1 ubiquitin-activating enzyme]-L-cysteine + N-terminal-ubiquitinyl-[acceptor protein].. The protein operates within protein modification; protein ubiquitination. In terms of biological role, accepts ubiquitin from the E1 complex and catalyzes its covalent attachment to other proteins. Catalyzes monoubiquitination. Involved in degradation of misfolded chaperone substrate and DNA repair. This chain is Probable ubiquitin-conjugating enzyme E2 W-B (ube2wb), found in Danio rerio (Zebrafish).